The following is a 116-amino-acid chain: Large ribosomal subunit protein bL17 (116 aa).

This sequence belongs to the bacterial ribosomal protein bL17 family. Part of the 50S ribosomal subunit. Contacts protein L32.

This is Large ribosomal subunit protein bL17 from Fusobacterium nucleatum subsp. nucleatum (strain ATCC 25586 / DSM 15643 / BCRC 10681 / CIP 101130 / JCM 8532 / KCTC 2640 / LMG 13131 / VPI 4355).